The chain runs to 432 residues: Trigger factor (432 aa).

One can recognise a PPIase FKBP-type domain in the interval glutamate 161–proline 246.

The protein belongs to the FKBP-type PPIase family. Tig subfamily. As to quaternary structure, homodimer and monomer. In vivo most of the ribosomes are in complex with monomeric TF. Uncomplexed TF, however, is in a monomer-dimer equilibrium with approximately two thirds of TF existing in a dimeric state.

Its subcellular location is the cytoplasm. The catalysed reaction is [protein]-peptidylproline (omega=180) = [protein]-peptidylproline (omega=0). Involved in protein export. Acts as a chaperone by maintaining the newly synthesized protein in an open conformation. Functions as a peptidyl-prolyl cis-trans isomerase. The protein is Trigger factor of Escherichia coli O127:H6 (strain E2348/69 / EPEC).